The chain runs to 198 residues: Recombination protein RecR (198 aa).

The C4-type zinc-finger motif lies at 56–71; that stretch reads CKVCGNFSEEDECVIC. Positions 79-174 constitute a Toprim domain; sequence GVICVVEEPK…RVSKLASGLP (96 aa).

It belongs to the RecR family.

May play a role in DNA repair. It seems to be involved in an RecBC-independent recombinational process of DNA repair. It may act with RecF and RecO. The sequence is that of Recombination protein RecR from Tropheryma whipplei (strain TW08/27) (Whipple's bacillus).